Here is a 324-residue protein sequence, read N- to C-terminus: Homoserine kinase (324 aa).

ATP is bound at residue 100-110; the sequence is PLSSGMGSSAA.

The protein belongs to the GHMP kinase family. Homoserine kinase subfamily.

The protein resides in the cytoplasm. It carries out the reaction L-homoserine + ATP = O-phospho-L-homoserine + ADP + H(+). The protein operates within amino-acid biosynthesis; L-threonine biosynthesis; L-threonine from L-aspartate: step 4/5. In terms of biological role, catalyzes the ATP-dependent phosphorylation of L-homoserine to L-homoserine phosphate. This chain is Homoserine kinase, found in Chlorobaculum tepidum (strain ATCC 49652 / DSM 12025 / NBRC 103806 / TLS) (Chlorobium tepidum).